The sequence spans 319 residues: Acetyl-coenzyme A carboxylase carboxyl transferase subunit alpha (319 aa).

Positions 39–293 (KLEKKVDRMR…HEAIARQLKE (255 aa)) constitute a CoA carboxyltransferase C-terminal domain.

The protein belongs to the AccA family. In terms of assembly, acetyl-CoA carboxylase is a heterohexamer composed of biotin carboxyl carrier protein (AccB), biotin carboxylase (AccC) and two subunits each of ACCase subunit alpha (AccA) and ACCase subunit beta (AccD).

It is found in the cytoplasm. The catalysed reaction is N(6)-carboxybiotinyl-L-lysyl-[protein] + acetyl-CoA = N(6)-biotinyl-L-lysyl-[protein] + malonyl-CoA. The protein operates within lipid metabolism; malonyl-CoA biosynthesis; malonyl-CoA from acetyl-CoA: step 1/1. Its function is as follows. Component of the acetyl coenzyme A carboxylase (ACC) complex. First, biotin carboxylase catalyzes the carboxylation of biotin on its carrier protein (BCCP) and then the CO(2) group is transferred by the carboxyltransferase to acetyl-CoA to form malonyl-CoA. This chain is Acetyl-coenzyme A carboxylase carboxyl transferase subunit alpha, found in Geobacter sulfurreducens (strain ATCC 51573 / DSM 12127 / PCA).